The primary structure comprises 482 residues: tRNA sulfurtransferase (482 aa).

Positions 61–165 constitute a THUMP domain; the sequence is AEVLEILTHT…GDKLNQVLAR (105 aa). ATP is bound by residues 183-184, Lys265, Gly287, and Gln296; that span reads LI. A disulfide bridge links Cys344 with Cys456. The Rhodanese domain occupies 404–482; it reads VEEHAVVLDI…GFNNVKVYRP (79 aa). The active-site Cysteine persulfide intermediate is the Cys456.

It belongs to the ThiI family.

It localises to the cytoplasm. The catalysed reaction is [ThiI sulfur-carrier protein]-S-sulfanyl-L-cysteine + a uridine in tRNA + 2 reduced [2Fe-2S]-[ferredoxin] + ATP + H(+) = [ThiI sulfur-carrier protein]-L-cysteine + a 4-thiouridine in tRNA + 2 oxidized [2Fe-2S]-[ferredoxin] + AMP + diphosphate. It catalyses the reaction [ThiS sulfur-carrier protein]-C-terminal Gly-Gly-AMP + S-sulfanyl-L-cysteinyl-[cysteine desulfurase] + AH2 = [ThiS sulfur-carrier protein]-C-terminal-Gly-aminoethanethioate + L-cysteinyl-[cysteine desulfurase] + A + AMP + 2 H(+). It functions in the pathway cofactor biosynthesis; thiamine diphosphate biosynthesis. Catalyzes the ATP-dependent transfer of a sulfur to tRNA to produce 4-thiouridine in position 8 of tRNAs, which functions as a near-UV photosensor. Also catalyzes the transfer of sulfur to the sulfur carrier protein ThiS, forming ThiS-thiocarboxylate. This is a step in the synthesis of thiazole, in the thiamine biosynthesis pathway. The sulfur is donated as persulfide by IscS. In Vibrio parahaemolyticus serotype O3:K6 (strain RIMD 2210633), this protein is tRNA sulfurtransferase.